Reading from the N-terminus, the 609-residue chain is Chaperone protein DnaK (609 aa).

Threonine 172 carries the phosphothreonine; by autocatalysis modification. Residues 578–609 (QAQAQQQAGAGGAAKKDENVVDAEFEEVKDDK) are disordered. The segment covering 597–609 (VVDAEFEEVKDDK) has biased composition (acidic residues).

Belongs to the heat shock protein 70 family.

In terms of biological role, acts as a chaperone. This chain is Chaperone protein DnaK, found in Geobacillus sp. (strain WCH70).